Here is a 631-residue protein sequence, read N- to C-terminus: 2-isopropylmalate synthase 2, chloroplastic (631 aa).

A chloroplast-targeting transit peptide spans 1–46 (MESSILKSPNLSSPSFGVPSIPALSSSSTSPFSSLHLRSQNHRTIS). A Pyruvate carboxyltransferase domain is found at 87–360 (VRIFDTTLRD…FTGIDTRHIV (274 aa)). A divalent metal cation contacts are provided by Asp96, His293, and Asn329.

The protein belongs to the alpha-IPM synthase/homocitrate synthase family. LeuA type 1 subfamily. Homotetramer. The cofactor is Mg(2+). Mn(2+) serves as cofactor. Expressed in roots, stems, leaves, flowers and siliques.

The protein resides in the plastid. The protein localises to the chloroplast. It catalyses the reaction 3-methyl-2-oxobutanoate + acetyl-CoA + H2O = (2S)-2-isopropylmalate + CoA + H(+). The protein operates within amino-acid biosynthesis; L-leucine biosynthesis; L-leucine from 3-methyl-2-oxobutanoate: step 1/4. Its activity is regulated as follows. Feedback inhibition by Leu. Its function is as follows. Catalyzes the condensation of the acetyl group of acetyl-CoA with 3-methyl-2-oxobutanoate (2-oxoisovalerate) to form 3-carboxy-3-hydroxy-4-methylpentanoate (2-isopropylmalate). Involved in Leu biosynthesis, but does not participate in the chain elongation of glucosinolates. The sequence is that of 2-isopropylmalate synthase 2, chloroplastic from Arabidopsis thaliana (Mouse-ear cress).